A 403-amino-acid chain; its full sequence is GPI mannosyltransferase 1 (403 aa).

The Cytoplasmic portion of the chain corresponds to 1 to 4 (MTGE). Residues 5 to 25 (EWGLTVLSFLVRVGFFLFGIY) form a helical membrane-spanning segment. Topologically, residues 26–78 (QDANFKVRYTDIDYFVFHDAAKYVYEGKSPYARDTYRYTPLLSWLLVPNHYFG) are lumenal. The helical transmembrane segment at 79-99 (WFHLGKVIFVIFDLVTGLIIM) threads the bilayer. At 100-110 (KLLNQAISRKR) the chain is on the cytoplasmic side. Residues 111 to 131 (ALILESIWLLNPMVITISTRG) traverse the membrane as a helical segment. Position 132 (N132) is a topological domain, lumenal. Residues 133–149 (AESVLCCLIMFTLFFLQ) form a helical membrane-spanning segment. The Cytoplasmic segment spans residues 150 to 160 (KSRYTLAGILY). Residues 161–181 (GLSIHFKIYPIIYCIPIAIFI) form a helical membrane-spanning segment. The Lumenal segment spans residues 182-193 (YYNKRNQGPRTQ). The chain crosses the membrane as a helical span at residues 194–214 (LTSLLNIGLSTLTTLLGCGWA). The Cytoplasmic portion of the chain corresponds to 215 to 266 (MYKIYGYEFLDQAYLYHLYRTDHRHNFSVWNMLLYLDSANKENGESNLSRYA). A helical transmembrane segment spans residues 267 to 287 (FVPQLLLVLVTGCLEWWNPTF). Over 288–310 (DNLLRVLFVQTFAFVTYNKVCTS) the chain is Lumenal. The chain crosses the membrane as a helical span at residues 311-331 (QYFVWYLIFLPFYLSRTHIGW). Residues 332-334 (KKG) lie on the Cytoplasmic side of the membrane. The chain crosses the membrane as a helical span at residues 335 to 355 (LLMATLWVGTQGIWLSQGYYL). The Lumenal segment spans residues 356 to 361 (EFEGKN). A helical transmembrane segment spans residues 362-382 (VFYPGLFIASVLFFVTNVWLL). At 383–403 (GQFITDIKIPTQPTVSNKKNN) the chain is on the cytoplasmic side.

It belongs to the PIGM family.

The protein localises to the endoplasmic reticulum membrane. The protein operates within glycolipid biosynthesis; glycosylphosphatidylinositol-anchor biosynthesis. Functionally, mannosyltransferase involved in glycosylphosphatidylinositol-anchor biosynthesis. Transfers the first alpha-1,4-mannose to GlcN-acyl-PI during GPI precursor assembly. Required for cell wall integrity. The protein is GPI mannosyltransferase 1 (GPI14) of Saccharomyces cerevisiae (strain ATCC 204508 / S288c) (Baker's yeast).